The following is a 238-amino-acid chain: Endo-chitosanase (238 aa).

The signal sequence occupies residues 1-17 (MRLSEILTVALVTGATA). Residue asparagine 83 is glycosylated (N-linked (GlcNAc...) asparagine).

Belongs to the glycosyl hydrolase 75 family.

The protein localises to the secreted. The enzyme catalyses Endohydrolysis of beta-(1-&gt;4)-linkages between D-glucosamine residues in a partly acetylated chitosan.. Chitosanase catalyzing the endo-type cleavage of chitosan, the deacylated form of chitin. Chitosanase may be crucial in the degradation of the deacetylated portion of chitin in the fungal cell wall. Chitoolisaccharides produced by the hydrolysis of partially N-acetylated chitosan are known to have many biological activities, including antibacterial activity, immune-enhancing effects, and elicitor activity. The chitosans with higher degrees of deacetylation were shown to be the better substrates. Chitodimer, chitotrimer, and chitotetramer are the major products but monoacetyl chitodimer, monoacetyl chitotrimer, and monoacetyl chitotetramer are also produced. This Aspergillus fumigatus (Neosartorya fumigata) protein is Endo-chitosanase (csn).